A 67-amino-acid polypeptide reads, in one-letter code: Small ribosomal subunit protein bS21 (67 aa).

This sequence belongs to the bacterial ribosomal protein bS21 family.

This is Small ribosomal subunit protein bS21 (rpsU) from Aquifex aeolicus (strain VF5).